A 367-amino-acid chain; its full sequence is MEITNVTEYDAIAKQKLPKMVYDYYASGAEDQWTLQENRNAFARILFRPRILIDVSKIDMTTTVLGFKISMPIMVAPTAMQKMAHPDGEYATARAASAAGTIMTLSSWATSSVEEVASTGPGIRFFQLYVYKNRNVVEQLVRRAERAGFKAIALTVDTPRLGRRESDIKNRFTLPPNLTLKNFEGLDLGKMDEANDSGLASYVAGQIDRTLSWKDVQWLQTITKLPILVKGVLTGEDARIAIQAGAAGIIVSNHGARQLDYVPATISALEEVVKATQGRIPVFLDGGVRRGTDVFKALALGASGIFIGRPVVFSLAAEGEAGVRKVLQMLRDEFELTMALSGCRSLKEISRNHITTEWDTPRPSARL.

M1 is modified (N-acetylmethionine). Position 24 (Y24) interacts with glyoxylate. Residues 77–79 (PTA), S106, 127–129 (QLY), and T155 contribute to the FMN site. Y129 provides a ligand contact to glyoxylate. R164 provides a ligand contact to glyoxylate. K230 and S252 together coordinate FMN. Residues H254 and R257 each contribute to the glyoxylate site. Residue H254 is the Proton acceptor of the active site. FMN-binding positions include 285-289 (DGGVR) and 308-309 (GR).

It belongs to the FMN-dependent alpha-hydroxy acid dehydrogenase family. In terms of assembly, homotetramer. The cofactor is FMN.

It localises to the peroxisome. The catalysed reaction is glycolate + O2 = glyoxylate + H2O2. Its pathway is photosynthesis; photorespiration; glycine from 2-phosphoglycolate: step 2/3. Its function is as follows. Catalyzes the oxidation of glycolate to glyoxylate, with a reduction of O2 to H2O2. Is a key enzyme in photorespiration in green plants. The polypeptide is Glycolate oxidase 1 (GLO1) (Arabidopsis thaliana (Mouse-ear cress)).